Here is a 432-residue protein sequence, read N- to C-terminus: Small ribosomal subunit protein uS5m (432 aa).

The tract at residues 110-130 is disordered; that stretch reads AGARKGRGKRTKKKKRKDLNR. Basic residues predominate over residues 113–127; that stretch reads RKGRGKRTKKKKRKD. Residues 220–284 enclose the S5 DRBM domain; the sequence is FDTRILEVRN…NRAIHYLHYI (65 aa).

This sequence belongs to the universal ribosomal protein uS5 family. In terms of assembly, component of the mitochondrial ribosome small subunit (28S) which comprises a 12S rRNA and about 30 distinct proteins.

It localises to the mitochondrion. The sequence is that of Small ribosomal subunit protein uS5m (Mrps5) from Mus musculus (Mouse).